The primary structure comprises 307 residues: Ribosomal RNA small subunit methyltransferase H (307 aa).

S-adenosyl-L-methionine is bound by residues 32-34 (GGH), Asp52, Phe78, Asp99, and Gln106.

The protein belongs to the methyltransferase superfamily. RsmH family.

The protein localises to the cytoplasm. The enzyme catalyses cytidine(1402) in 16S rRNA + S-adenosyl-L-methionine = N(4)-methylcytidine(1402) in 16S rRNA + S-adenosyl-L-homocysteine + H(+). Specifically methylates the N4 position of cytidine in position 1402 (C1402) of 16S rRNA. The protein is Ribosomal RNA small subunit methyltransferase H of Caldicellulosiruptor saccharolyticus (strain ATCC 43494 / DSM 8903 / Tp8T 6331).